Here is a 554-residue protein sequence, read N- to C-terminus: Raftlin (554 aa).

A lipid anchor (N-myristoyl glycine) is attached at glycine 2. Cysteine 3 is lipidated: S-palmitoyl cysteine. Phosphoserine is present on residues serine 183 and serine 199. Disordered stretches follow at residues 192–249 (CTLG…NEAG), 441–488 (KKRE…DQFS), and 504–554 (GRAS…TEAN). Composition is skewed to basic and acidic residues over residues 198 to 209 (SSLENDTPKAAE) and 475 to 487 (QAEE…EDQF). Residues serine 507 and serine 530 each carry the phosphoserine modification. Basic and acidic residues predominate over residues 526-542 (HNRDSVALRHSNPRAEA).

The protein belongs to the raftlin family. Interacts with TLR4; the interaction occurs in response to lipopolysaccharide stimulation. Interacts with CLTC; the interaction occurs in response to pathogens. Interacts with AP2A1 and AP2B1. Expressed in T-cells, B-cells, thymus and spleen (at protein level). Expressed in dendritic cells, macrophages, heart, lung and small intestine.

The protein localises to the cell membrane. Its subcellular location is the cytoplasm. The protein resides in the membrane raft. It is found in the endosome. It localises to the early endosome. In terms of biological role, involved in protein trafficking via association with clathrin and AP2 complex. Upon bacterial lipopolysaccharide stimulation, mediates internalization of TLR4 to endosomes in dendritic cells and macrophages, and internalization of poly(I:C) to TLR3-positive endosomes in myeloid dendritic cells and epithelial cells; resulting in activation of TICAM1-mediated signaling and subsequent IFNB1 production. Involved in T-cell antigen receptor-mediated signaling by regulating tyrosine kinase LCK localization, T-cell dependent antibody production and cytokine secretion. May regulate B-cell antigen receptor-mediated signaling. May play a pivotal role in the formation and/or maintenance of lipid rafts. The polypeptide is Raftlin (Rftn1) (Mus musculus (Mouse)).